The sequence spans 381 residues: Dihydroorotate dehydrogenase (quinone) (381 aa).

FMN-binding positions include Ala77–Lys81 and Ala101. Lys81 provides a ligand contact to substrate. Asn126–Gly129 is a substrate binding site. Residues Asn158 and Asn191 each coordinate FMN. Residue Asn191 coordinates substrate. Ser194 (nucleophile) is an active-site residue. Asn196 contacts substrate. FMN is bound by residues Lys229 and Thr257. Asn258–Thr259 is a substrate binding site. Residues Gly287, Gly316, and Tyr337–Thr338 each bind FMN.

The protein belongs to the dihydroorotate dehydrogenase family. Type 2 subfamily. Monomer. FMN serves as cofactor.

The protein resides in the cell membrane. It catalyses the reaction (S)-dihydroorotate + a quinone = orotate + a quinol. The protein operates within pyrimidine metabolism; UMP biosynthesis via de novo pathway; orotate from (S)-dihydroorotate (quinone route): step 1/1. Catalyzes the conversion of dihydroorotate to orotate with quinone as electron acceptor. The polypeptide is Dihydroorotate dehydrogenase (quinone) (pyrD) (Synechocystis sp. (strain ATCC 27184 / PCC 6803 / Kazusa)).